We begin with the raw amino-acid sequence, 280 residues long: 4-diphosphocytidyl-2-C-methyl-D-erythritol kinase (280 aa).

Residue Lys-8 is part of the active site. 91–101 (PVAAGLAGGST) serves as a coordination point for ATP. Asp-133 is a catalytic residue.

The protein belongs to the GHMP kinase family. IspE subfamily.

The enzyme catalyses 4-CDP-2-C-methyl-D-erythritol + ATP = 4-CDP-2-C-methyl-D-erythritol 2-phosphate + ADP + H(+). Its pathway is isoprenoid biosynthesis; isopentenyl diphosphate biosynthesis via DXP pathway; isopentenyl diphosphate from 1-deoxy-D-xylulose 5-phosphate: step 3/6. Functionally, catalyzes the phosphorylation of the position 2 hydroxy group of 4-diphosphocytidyl-2C-methyl-D-erythritol. This is 4-diphosphocytidyl-2-C-methyl-D-erythritol kinase from Clostridium botulinum (strain ATCC 19397 / Type A).